A 927-amino-acid chain; its full sequence is Heat shock protein hsp98 (927 aa).

The region spanning threonine 2–threonine 162 is the Clp R domain. Repeat regions lie at residues phenylalanine 7–leucine 87 and methionine 99–threonine 162. An NBD1 region spans residues leucine 179–proline 428. Residue glycine 224–threonine 231 participates in ATP binding. Positions glutamate 429–threonine 553 form a coiled coil. Residues glutamate 454–glutamate 473 are disordered. Residues valine 562 to alanine 752 are NBD2. An ATP-binding site is contributed by glycine 635–threonine 642. The tract at residues glutamate 908–aspartate 927 is disordered.

It belongs to the ClpA/ClpB family. Homohexamer, forming a ring with a central pore.

The protein resides in the cytoplasm. Its subcellular location is the nucleus. Functionally, required, in concert with Hsp40 and Hsp70 and small Hsps, for the dissociation, resolubilization and refolding of aggregates of damaged proteins after heat or other environmental stresses. Extracts proteins from aggregates by unfolding and threading them in an ATP-dependent process through the axial channel of the protein hexamer, after which they can be refolded by components of the Hsp70/Hsp40 chaperone system. The protein is Heat shock protein hsp98 (hsp98) of Neurospora crassa (strain ATCC 24698 / 74-OR23-1A / CBS 708.71 / DSM 1257 / FGSC 987).